The primary structure comprises 677 residues: MLYLVATGDYKGPSENHLSFTKGQRIEFLERTENGFIKGKLDGKVGIFPSSLITIETRPLSIIQNQPIKYSTETKDDTGSISSSTSTSTSSLTTPRAESSKDASGEQQPSTSTINGQSSSTSPILQSNGTTNTTTSSTSNNNIGDNISEKSFGDYDDTTSNHSKSASRLSVASFSTTTTATTTTTTTTTATSSKDKDKKDKKEKKEKKDKKSKDDDKSEKEGLYRKSKGSSSSSSSSSSSTKRRYANRKACEPWVVKKYEDIPEEVKSDMLKEDIPIKDIQDHFKLFLRILKFITRQKITLLIPIDPTIPTKEMNLLDLSDAESVAKSTTMFTREEIRTSAFDNVDAFVDAPIMDDNEKAAKTTEIKLERKRILTGISTEFLGQASTTIRVIPSSDIKKRIKFTHMVGRGQYGKVYDALYDKKRVCVKVVNYSTPKEQHNVLQEIGFLTQCDHPNILKYNCSVLYGSDLFIVSEFIQGGTLEQASASSHVFKETQVGFIGLELLKAISYLHEKKLIHRDIKAANVMVSTDGEVKLIDFGLCASVEKGGSQHMVGSPYYMSPEMIRGEECSYPSDIWSFGICILELLFKKPPHRDSRMKAMFYNAINGIDFPKIRCSIDLKDMLWQCFESNPEKRSTVDKLMRHPFFKRCESKSQMKSVFTDMFSTSSKNSISTTGFF.

The SH3 domain occupies 1–58; sequence MLYLVATGDYKGPSENHLSFTKGQRIEFLERTENGFIKGKLDGKVGIFPSSLITIETR. The segment at 72–244 is disordered; sequence TETKDDTGSI…SSSSSSTKRR (173 aa). Low complexity predominate over residues 79–94; sequence GSISSSTSTSTSSLTT. Residues 105–126 show a composition bias toward polar residues; that stretch reads GEQQPSTSTINGQSSSTSPILQ. Residues 127–146 show a composition bias toward low complexity; sequence SNGTTNTTTSSTSNNNIGDN. Positions 158 to 174 are enriched in polar residues; it reads TTSNHSKSASRLSVASF. The span at 175-192 shows a compositional bias: low complexity; sequence STTTTATTTTTTTTTATS. The span at 209-224 shows a compositional bias: basic and acidic residues; sequence DKKSKDDDKSEKEGLY. The span at 230-240 shows a compositional bias: low complexity; it reads SSSSSSSSSSS. Residues 401–646 enclose the Protein kinase domain; it reads IKFTHMVGRG…VDKLMRHPFF (246 aa). ATP-binding positions include 407 to 415 and Lys428; that span reads VGRGQYGKV. Residue Asp519 is the Proton acceptor of the active site.

This sequence belongs to the protein kinase superfamily. Ser/Thr protein kinase family. STE20 subfamily. Mg(2+) serves as cofactor.

The enzyme catalyses L-seryl-[protein] + ATP = O-phospho-L-seryl-[protein] + ADP + H(+). The catalysed reaction is L-threonyl-[protein] + ATP = O-phospho-L-threonyl-[protein] + ADP + H(+). The protein is Probable serine/threonine-protein kinase mkcF of Dictyostelium discoideum (Social amoeba).